The following is a 166-amino-acid chain: UPF0178 protein BPUM_2255 (166 aa).

This sequence belongs to the UPF0178 family.

This chain is UPF0178 protein BPUM_2255, found in Bacillus pumilus (strain SAFR-032).